We begin with the raw amino-acid sequence, 60 residues long: MANKLEITLTKSVIGTKPAQRKTVEALGLRKLHQTVEKADNAATRGMLDKVAHLVTVKEI.

This sequence belongs to the universal ribosomal protein uL30 family. Part of the 50S ribosomal subunit.

The protein is Large ribosomal subunit protein uL30 of Lysinibacillus sphaericus (strain C3-41).